We begin with the raw amino-acid sequence, 448 residues long: Phosphoglucosamine mutase (448 aa).

Ser-100 (phosphoserine intermediate) is an active-site residue. Mg(2+) is bound by residues Ser-100, Asp-240, Asp-242, and Asp-244. At Ser-100 the chain carries Phosphoserine.

The protein belongs to the phosphohexose mutase family. It depends on Mg(2+) as a cofactor. Post-translationally, activated by phosphorylation.

It catalyses the reaction alpha-D-glucosamine 1-phosphate = D-glucosamine 6-phosphate. In terms of biological role, catalyzes the conversion of glucosamine-6-phosphate to glucosamine-1-phosphate. In Clostridioides difficile (strain 630) (Peptoclostridium difficile), this protein is Phosphoglucosamine mutase.